A 174-amino-acid polypeptide reads, in one-letter code: Small ribosomal subunit protein uS5 (174 aa).

The S5 DRBM domain maps to 17 to 80; it reads WQERVVQIRR…ADGKKHLIDV (64 aa).

Belongs to the universal ribosomal protein uS5 family. In terms of assembly, part of the 30S ribosomal subunit. Contacts proteins S4 and S8.

With S4 and S12 plays an important role in translational accuracy. Its function is as follows. Located at the back of the 30S subunit body where it stabilizes the conformation of the head with respect to the body. The chain is Small ribosomal subunit protein uS5 from Thermosynechococcus vestitus (strain NIES-2133 / IAM M-273 / BP-1).